The primary structure comprises 61 residues: MIFAIDLIKSNCKREILKIKKIKINYLFYGNCRYLINMINLKSSTTRILQPLDSVVISHDS.

This is an uncharacterized protein from Dictyostelium discoideum (Social amoeba).